The primary structure comprises 553 residues: Putative transport protein YidE (553 aa).

Helical transmembrane passes span 4-24 (IALT…IGNV), 28-48 (GIGL…HFVS), 65-85 (FGLI…FFAS), 95-115 (LFAV…HKLF), and 158-178 (MSYA…MWML). RCK C-terminal domains follow at residues 191-276 (QQHE…VIGQ) and 279-361 (DTSL…VLGN). Transmembrane regions (helical) follow at residues 371–391 (MLPV…PVFV), 393–413 (GFPA…ALIL), 431–448 (NLAL…VVGL), 464–484 (LSWI…VGIL), 493–513 (YLTM…LAFA), and 533–553 (LVMF…WSIG).

This sequence belongs to the AAE transporter (TC 2.A.81) family. YidE subfamily.

The protein resides in the cell membrane. This chain is Putative transport protein YidE, found in Shigella sonnei (strain Ss046).